The primary structure comprises 312 residues: Ribonuclease Z (312 aa).

7 residues coordinate Zn(2+): His63, His65, Asp67, His68, His141, Asp212, and His270. Asp67 functions as the Proton acceptor in the catalytic mechanism.

It belongs to the RNase Z family. In terms of assembly, homodimer. Zn(2+) serves as cofactor.

It carries out the reaction Endonucleolytic cleavage of RNA, removing extra 3' nucleotides from tRNA precursor, generating 3' termini of tRNAs. A 3'-hydroxy group is left at the tRNA terminus and a 5'-phosphoryl group is left at the trailer molecule.. In terms of biological role, zinc phosphodiesterase, which displays some tRNA 3'-processing endonuclease activity. Probably involved in tRNA maturation, by removing a 3'-trailer from precursor tRNA. The sequence is that of Ribonuclease Z from Lactobacillus helveticus (strain DPC 4571).